The sequence spans 193 residues: Histone H5 (193 aa).

A compositionally biased stretch (pro residues) spans 1-11 (TDSPIPAPAPA). Disordered regions lie at residues 1–29 (TDSPIPAPAPAAKPKRARAPRKPASHPTY) and 80–193 (GVLK…PKKK). Over residues 13-24 (KPKRARAPRKPA) the composition is skewed to basic residues. Residues 25–98 (SHPTYSEMIA…GASGSFRLAK (74 aa)) enclose the H15 domain. Residues 104-193 (RSPAGRKKKK…SGARKSPKKK (90 aa)) show a composition bias toward basic residues.

It belongs to the histone H1/H5 family. Erythroid cells.

It localises to the nucleus. It is found in the chromosome. Histone H5 performs the same function as H1, being necessary for the condensation of nucleosome chains into higher order structures, and replaces histone H1 in certain cells. The chain is Histone H5 from Anser anser anser (Western greylag goose).